The chain runs to 532 residues: Carboxypeptidase Y (532 aa).

The N-terminal stretch at 1-20 (MKAFTSLLCGLGLSTTLAKA) is a signal peptide. A propeptide spans 21–111 (ISLQRPLGLD…AIENYQLRVN (91 aa)) (mediates translocation across the endoplasmic reticulum, renders the enzyme inactive during transit, and targets the molecule to the vacuole). The Vacuolar targeting signal motif lies at 24 to 27 (QRPL). N-linked (GlcNAc...) (high mannose) asparagine glycans are attached at residues asparagine 124 and asparagine 198. 5 disulfides stabilise this stretch: cysteine 167–cysteine 409, cysteine 304–cysteine 318, cysteine 328–cysteine 351, cysteine 335–cysteine 344, and cysteine 373–cysteine 379. Residue serine 257 is part of the active site. Asparagine 279 carries N-linked (GlcNAc...) (high mannose) asparagine glycosylation. The active site involves aspartate 449. Cysteine 452 contributes to the substrate binding site. The N-linked (GlcNAc...) (high mannose) asparagine glycan is linked to asparagine 479. Residue histidine 508 is part of the active site. Methionine 509 contacts substrate.

The protein belongs to the peptidase S10 family. Post-translationally, enters the endoplasmic reticulum as an inactive zymogen and is modified by four N-linked core oligosaccharides, giving rise to a precursor known as P1 (67 kDa). As P1 transits through the Golgi, extension of its core oligosaccharides leads to the Golgi-modified P2 precursor (69 kDa). P2 is sorted away from secretory proteins at or beyond a late Golgi compartment and is subsequently delivered to the vacuole via a prevacuolar endosome-like compartment. Upon arrival in the vacuole, the N-terminal prosegment of P2 is cleaved by vacuolar proteases to yield the enzymatically active mature vacuolar form of CPY (61 kDa). The four high mannose core N-glycans found in mature CPY are Man(11-15)GlcNAc(2) at Asn-124, Man(8-12)GlcNAc(2) at Asn-198, Man(9-14)GlcNAc(2) at Asn-279 and phosphorylated Man(12-17)GlcNAc(2) as well as Man(11-16)GlcNAc(2) at Asn-479.

The protein localises to the vacuole lumen. The enzyme catalyses Release of a C-terminal amino acid with broad specificity.. With respect to regulation, inhibited by ZPCK. Vacuolar serine-type carboxypeptidase involved in degradation of small peptides. Digests preferentially peptides containing an aliphatic or hydrophobic residue in P1' position, as well as methionine, leucine or phenylalanine in P1 position of ester substrate. Also plays a role in breakdown of the autophagic body and the autophagosome-dependent protein synthesis. Plays a key role in phytochelatin (PC) synthesis from glutathione (GSH) by cleaving the Gly from GSH and form the PC-peptides of the structure (gamma-Glu-Cys)2-Gly. Also involved in resistance to xenobiotics via the degradation of glutathione-S-conjugates. This Saccharomyces cerevisiae (strain ATCC 204508 / S288c) (Baker's yeast) protein is Carboxypeptidase Y.